The sequence spans 269 residues: uncharacterized protein (269 aa).

The stretch at 3–66 (VDQAAIDEIL…QNLQNLAEGA (64 aa)) forms a coiled coil. Residues 83–142 (AQIPEPPKPEPEVEQPETETGPEPEPEAEPELKEVKEDEPPEEDVVRELDESKSAEPIPE) form a disordered region. The span at 94 to 111 (EVEQPETETGPEPEPEAE) shows a compositional bias: acidic residues. Basic and acidic residues predominate over residues 112–136 (PELKEVKEDEPPEEDVVRELDESKS).

This is an uncharacterized protein from Archaeoglobus fulgidus (strain ATCC 49558 / DSM 4304 / JCM 9628 / NBRC 100126 / VC-16).